We begin with the raw amino-acid sequence, 367 residues long: tRNA-specific 2-thiouridylase MnmA (367 aa).

ATP is bound by residues 24-31 and Leu-50; that span reads AMSGGVDS. The active-site Nucleophile is Cys-115. An intrachain disulfide couples Cys-115 to Cys-211. Gly-139 contacts ATP. The interaction with tRNA stretch occupies residues 161-163; the sequence is KDQ. Cys-211 (cysteine persulfide intermediate) is an active-site residue.

It belongs to the MnmA/TRMU family.

It localises to the cytoplasm. The catalysed reaction is S-sulfanyl-L-cysteinyl-[protein] + uridine(34) in tRNA + AH2 + ATP = 2-thiouridine(34) in tRNA + L-cysteinyl-[protein] + A + AMP + diphosphate + H(+). Functionally, catalyzes the 2-thiolation of uridine at the wobble position (U34) of tRNA, leading to the formation of s(2)U34. This Ehrlichia canis (strain Jake) protein is tRNA-specific 2-thiouridylase MnmA.